Here is a 277-residue protein sequence, read N- to C-terminus: Adaptin ear-binding coat-associated protein 1 (277 aa).

The interval 164–277 (GNITAKKGGT…APQPSNWVQF (114 aa)) is disordered. A compositionally biased stretch (pro residues) spans 187–201 (LPPPPGGKVTIPPPS). Residue threonine 211 is modified to Phosphothreonine. A compositionally biased stretch (low complexity) spans 222-234 (SNDSDILLDLDSP). Pro residues predominate over residues 235 to 245 (APVPTSAPAPA). Short sequence motifs (WXXF motif) lie at residues 254-257 (WGDF) and 274-277 (WVQF). The segment covering 258 to 277 (STASSSVPNQAPQPSNWVQF) has biased composition (polar residues).

It belongs to the NECAP family. As to quaternary structure, interacts with AP1G1 and AP2A1 components of the adapter protein complexes AP-1 and AP-2. Interacts with the GAE domain proteins GGA1, GGA2 and GGA3. Interacts with AP2A2. In terms of tissue distribution, expressed predominantly in brain (at protein level).

It localises to the cytoplasmic vesicle. The protein localises to the clathrin-coated vesicle membrane. Its subcellular location is the cell membrane. Its function is as follows. Involved in endocytosis. This chain is Adaptin ear-binding coat-associated protein 1 (Necap1), found in Rattus norvegicus (Rat).